The chain runs to 144 residues: Transcriptional regulator SlyA (144 aa).

An HTH marR-type domain is found at 2-135 (ESSLGSDLAR…LNNIIAKLER (134 aa)). Residues 49–72 (QIQLAKAIGIEQPSLVRTLDQLES) constitute a DNA-binding region (H-T-H motif).

The protein belongs to the SlyA family. Homodimer.

Transcription regulator that can specifically activate or repress expression of target genes. This is Transcriptional regulator SlyA from Blochmanniella floridana.